We begin with the raw amino-acid sequence, 171 residues long: Adenine phosphoribosyltransferase (171 aa).

It belongs to the purine/pyrimidine phosphoribosyltransferase family. As to quaternary structure, homodimer.

It is found in the cytoplasm. The enzyme catalyses AMP + diphosphate = 5-phospho-alpha-D-ribose 1-diphosphate + adenine. Its pathway is purine metabolism; AMP biosynthesis via salvage pathway; AMP from adenine: step 1/1. Functionally, catalyzes a salvage reaction resulting in the formation of AMP, that is energically less costly than de novo synthesis. This is Adenine phosphoribosyltransferase from Methylococcus capsulatus (strain ATCC 33009 / NCIMB 11132 / Bath).